The following is a 307-amino-acid chain: UDP-3-O-acyl-N-acetylglucosamine deacetylase (307 aa).

Residues His-78, His-241, and Asp-245 each coordinate Zn(2+). His-268 acts as the Proton donor in catalysis.

It belongs to the LpxC family. Zn(2+) serves as cofactor.

The catalysed reaction is a UDP-3-O-[(3R)-3-hydroxyacyl]-N-acetyl-alpha-D-glucosamine + H2O = a UDP-3-O-[(3R)-3-hydroxyacyl]-alpha-D-glucosamine + acetate. The protein operates within glycolipid biosynthesis; lipid IV(A) biosynthesis; lipid IV(A) from (3R)-3-hydroxytetradecanoyl-[acyl-carrier-protein] and UDP-N-acetyl-alpha-D-glucosamine: step 2/6. Its function is as follows. Catalyzes the hydrolysis of UDP-3-O-myristoyl-N-acetylglucosamine to form UDP-3-O-myristoylglucosamine and acetate, the committed step in lipid A biosynthesis. In Verminephrobacter eiseniae (strain EF01-2), this protein is UDP-3-O-acyl-N-acetylglucosamine deacetylase.